A 202-amino-acid polypeptide reads, in one-letter code: Stress enhanced protein 2, chloroplastic (202 aa).

The transit peptide at 1 to 60 (MAMATRAIRYQLPSPRFRAPRCESSEPIKQIQIQQRPRGGDLAENGKIVLQPRLCTLRSY) directs the protein to the chloroplast. A run of 2 helical transmembrane segments spans residues 111-131 (LAMI…NSLF) and 142-162 (AIGA…LTIS).

Belongs to the ELIP/psbS family.

The protein localises to the plastid. Its subcellular location is the chloroplast thylakoid membrane. Functionally, may be involved in non-photochemical quenching, a process that maintains the balance between dissipation and utilization of light energy to minimize generation of oxidizing molecules, thereby protecting the plant against photo-oxidative damage. May play a photoprotective role in the thylakoid membrane in response to light stress. This Arabidopsis thaliana (Mouse-ear cress) protein is Stress enhanced protein 2, chloroplastic.